Reading from the N-terminus, the 214-residue chain is Pyrrolidone-carboxylate peptidase (214 aa).

Residues E80, C143, and H166 contribute to the active site.

The protein belongs to the peptidase C15 family. As to quaternary structure, homotetramer.

The protein localises to the cytoplasm. The catalysed reaction is Release of an N-terminal pyroglutamyl group from a polypeptide, the second amino acid generally not being Pro.. Removes 5-oxoproline from various penultimate amino acid residues except L-proline. The sequence is that of Pyrrolidone-carboxylate peptidase from Klebsiella pneumoniae (strain 342).